Consider the following 403-residue polypeptide: Phosphoglycerate kinase (403 aa).

Residues 22-24 (DLN), R37, 60-63 (HLGR), R119, and R156 each bind substrate. ATP contacts are provided by residues K206, G302, E333, and 359-362 (GGDS).

This sequence belongs to the phosphoglycerate kinase family. Monomer.

The protein resides in the cytoplasm. The enzyme catalyses (2R)-3-phosphoglycerate + ATP = (2R)-3-phospho-glyceroyl phosphate + ADP. It participates in carbohydrate degradation; glycolysis; pyruvate from D-glyceraldehyde 3-phosphate: step 2/5. The chain is Phosphoglycerate kinase from Leifsonia xyli subsp. xyli (strain CTCB07).